A 419-amino-acid polypeptide reads, in one-letter code: Carboxypeptidase A2 (419 aa).

A signal peptide spans Met1–Cys18. The propeptide at Leu19–Arg114 is activation peptide. The 293-residue stretch at Ala122 to Val414 folds into the Peptidase M14 domain. His179 and Glu182 together coordinate Zn(2+). Substrate-binding positions include His179–Glu182, Arg237, and Asn254–Arg255. Cys248 and Cys271 are oxidised to a cystine. His306 is a binding site for Zn(2+). Ser307–Tyr308 serves as a coordination point for substrate. A disulfide bridge links Cys320 with Cys354. Tyr358 contributes to the substrate binding site. The active-site Proton donor/acceptor is Glu380.

It belongs to the peptidase M14 family. The cofactor is Zn(2+).

The protein localises to the secreted. It carries out the reaction Similar to that of carboxypeptidase A (EC 3.4.17.1), but with a preference for bulkier C-terminal residues.. Carboxypeptidase that catalyzes the release of a C-terminal amino acid, with a preference for large aromatic C-terminal residues. This chain is Carboxypeptidase A2 (CPA2), found in Homo sapiens (Human).